Here is an 827-residue protein sequence, read N- to C-terminus: Leucine--tRNA ligase (827 aa).

The 'HIGH' region motif lies at 42–52 (PYPSGKLHMGH). The short motif at 583–587 (KMSKS) is the 'KMSKS' region element. Lys-586 is a binding site for ATP.

This sequence belongs to the class-I aminoacyl-tRNA synthetase family.

It is found in the cytoplasm. It carries out the reaction tRNA(Leu) + L-leucine + ATP = L-leucyl-tRNA(Leu) + AMP + diphosphate. The sequence is that of Leucine--tRNA ligase from Pelotomaculum thermopropionicum (strain DSM 13744 / JCM 10971 / SI).